A 728-amino-acid polypeptide reads, in one-letter code: LPS-assembly protein LptD (728 aa).

A signal peptide spans M1–A21.

This sequence belongs to the LptD family. As to quaternary structure, component of the lipopolysaccharide transport and assembly complex. Interacts with LptE and LptA.

Its subcellular location is the cell outer membrane. Together with LptE, is involved in the assembly of lipopolysaccharide (LPS) at the surface of the outer membrane. In Thiobacillus denitrificans (strain ATCC 25259 / T1), this protein is LPS-assembly protein LptD.